We begin with the raw amino-acid sequence, 143 residues long: Transcriptional regulatory protein RosR (143 aa).

The C2H3-type zinc-finger motif lies at 79 to 97; sequence CLECGGNFKSLKRHLMTHH.

Belongs to the ros/MucR family.

This chain is Transcriptional regulatory protein RosR (rosR), found in Rhizobium etli (strain ATCC 51251 / DSM 11541 / JCM 21823 / NBRC 15573 / CFN 42).